The chain runs to 341 residues: Adenine deaminase (341 aa).

Zn(2+) contacts are provided by His17, His19, and His197. Glu200 acts as the Proton donor in catalysis. A Zn(2+)-binding site is contributed by Asp278. Asp279 is a binding site for substrate.

This sequence belongs to the metallo-dependent hydrolases superfamily. Adenosine and AMP deaminases family. Adenine deaminase type 2 subfamily. Requires Zn(2+) as cofactor.

The catalysed reaction is adenine + H2O + H(+) = hypoxanthine + NH4(+). Catalyzes the hydrolytic deamination of adenine to hypoxanthine. Plays an important role in the purine salvage pathway and in nitrogen catabolism. The chain is Adenine deaminase from Chlorobium luteolum (strain DSM 273 / BCRC 81028 / 2530) (Pelodictyon luteolum).